The following is a 295-amino-acid chain: 4-hydroxy-tetrahydrodipicolinate synthase (295 aa).

Thr47 is a pyruvate binding site. Tyr135 functions as the Proton donor/acceptor in the catalytic mechanism. Lys163 functions as the Schiff-base intermediate with substrate in the catalytic mechanism. Ile206 is a pyruvate binding site.

This sequence belongs to the DapA family. Homodimer.

Its subcellular location is the cytoplasm. The enzyme catalyses L-aspartate 4-semialdehyde + pyruvate = (2S,4S)-4-hydroxy-2,3,4,5-tetrahydrodipicolinate + H2O + H(+). It functions in the pathway amino-acid biosynthesis; L-lysine biosynthesis via DAP pathway; (S)-tetrahydrodipicolinate from L-aspartate: step 3/4. Catalyzes the condensation of (S)-aspartate-beta-semialdehyde [(S)-ASA] and pyruvate to 4-hydroxy-tetrahydrodipicolinate (HTPA). The sequence is that of 4-hydroxy-tetrahydrodipicolinate synthase from Staphylococcus aureus (strain Mu50 / ATCC 700699).